The primary structure comprises 132 residues: Small ribosomal subunit protein uS8 (132 aa).

This sequence belongs to the universal ribosomal protein uS8 family. As to quaternary structure, part of the 30S ribosomal subunit. Contacts proteins S5 and S12.

Functionally, one of the primary rRNA binding proteins, it binds directly to 16S rRNA central domain where it helps coordinate assembly of the platform of the 30S subunit. This Mycobacterium leprae (strain Br4923) protein is Small ribosomal subunit protein uS8.